We begin with the raw amino-acid sequence, 278 residues long: 3-methyl-2-oxobutanoate hydroxymethyltransferase (278 aa).

The Mg(2+) site is built by aspartate 43 and aspartate 82. 3-methyl-2-oxobutanoate-binding positions include 43–44 (DS), aspartate 82, and lysine 112. Position 114 (glutamate 114) interacts with Mg(2+). Glutamate 181 acts as the Proton acceptor in catalysis.

The protein belongs to the PanB family. As to quaternary structure, homodecamer; pentamer of dimers. Mg(2+) serves as cofactor.

Its subcellular location is the cytoplasm. The catalysed reaction is 3-methyl-2-oxobutanoate + (6R)-5,10-methylene-5,6,7,8-tetrahydrofolate + H2O = 2-dehydropantoate + (6S)-5,6,7,8-tetrahydrofolate. The protein operates within cofactor biosynthesis; (R)-pantothenate biosynthesis; (R)-pantoate from 3-methyl-2-oxobutanoate: step 1/2. In terms of biological role, catalyzes the reversible reaction in which hydroxymethyl group from 5,10-methylenetetrahydrofolate is transferred onto alpha-ketoisovalerate to form ketopantoate. The sequence is that of 3-methyl-2-oxobutanoate hydroxymethyltransferase from Desulfitobacterium hafniense (strain Y51).